The sequence spans 338 residues: Probable tRNA pseudouridine synthase B (338 aa).

D78 (nucleophile) is an active-site residue. The region spanning 245-320 (LPKIILRDSA…LAATSVRIMM (76 aa)) is the PUA domain.

Belongs to the pseudouridine synthase TruB family. Type 2 subfamily.

It catalyses the reaction uridine(55) in tRNA = pseudouridine(55) in tRNA. Functionally, could be responsible for synthesis of pseudouridine from uracil-55 in the psi GC loop of transfer RNAs. The protein is Probable tRNA pseudouridine synthase B of Methanosarcina barkeri (strain Fusaro / DSM 804).